The chain runs to 704 residues: Ion-translocating oxidoreductase complex subunit C (704 aa).

4Fe-4S ferredoxin-type domains are found at residues 368 to 397 (MGAP…QQLY) and 407 to 436 (KATA…VQYF). Positions 377, 380, 383, 387, 416, 419, 422, and 426 each coordinate [4Fe-4S] cluster. The tract at residues 536-685 (RAKQAAHPMA…ADPRKAAVAA (150 aa)) is disordered. Low complexity predominate over residues 556–565 (KAAVEAAIAR).

This sequence belongs to the 4Fe4S bacterial-type ferredoxin family. RnfC subfamily. As to quaternary structure, the complex is composed of six subunits: RsxA, RsxB, RsxC, RsxD, RsxE and RsxG. The cofactor is [4Fe-4S] cluster.

It is found in the cell inner membrane. Part of a membrane-bound complex that couples electron transfer with translocation of ions across the membrane. Required to maintain the reduced state of SoxR. This Salmonella dublin (strain CT_02021853) protein is Ion-translocating oxidoreductase complex subunit C.